Here is a 354-residue protein sequence, read N- to C-terminus: ATP-dependent (S)-NAD(P)H-hydrate dehydratase (354 aa).

The YjeF C-terminal domain occupies 42–350 (AENILRAITP…ECLGRSLEDI (309 aa)). (6S)-NADPHX is bound by residues Gly-155 and 208–214 (NVNEYKR). ATP is bound by residues 248-252 (KGKSD) and 267-276 (GSPRRCGGQG). Residue Asp-277 coordinates (6S)-NADPHX.

This sequence belongs to the NnrD/CARKD family. The cofactor is Mg(2+).

It catalyses the reaction (6S)-NADHX + ATP = ADP + phosphate + NADH + H(+). It carries out the reaction (6S)-NADPHX + ATP = ADP + phosphate + NADPH + H(+). Its function is as follows. Catalyzes the dehydration of the S-form of NAD(P)HX at the expense of ATP, which is converted to ADP. Together with NAD(P)HX epimerase, which catalyzes the epimerization of the S- and R-forms, the enzyme allows the repair of both epimers of NAD(P)HX, a damaged form of NAD(P)H that is a result of enzymatic or heat-dependent hydration. This Vitis vinifera (Grape) protein is ATP-dependent (S)-NAD(P)H-hydrate dehydratase.